The primary structure comprises 2381 residues: Protein Ycf2 (2381 aa).

ATP is bound at residue 1655–1662; sequence GPMETGRS.

The protein belongs to the Ycf2 family.

The protein resides in the plastid. It is found in the chloroplast stroma. Its function is as follows. Probable ATPase of unknown function. Its presence in a non-photosynthetic plant (Epifagus virginiana) and experiments in tobacco indicate that it has an essential function which is probably not related to photosynthesis. In Angiopteris evecta (Mule's foot fern), this protein is Protein Ycf2.